The primary structure comprises 171 residues: tRNA-splicing endonuclease subunit Sen15 (171 aa).

The tract at residues 1 to 35 is disordered; sequence MEERGDSEPTPGCSGLGPGGVRGFGDGGGAPSWAP. Serine 7 carries the post-translational modification Phosphoserine. Gly residues predominate over residues 14 to 30; it reads SGLGPGGVRGFGDGGGA. The residue at position 168 (serine 168) is a Phosphoserine.

This sequence belongs to the SEN15 family. In terms of assembly, homodimer. tRNA splicing endonuclease is a heterotetramer composed of TSEN2, TSEN15, TSEN34/LENG5 and TSEN54. tRNA splicing endonuclease complex also contains proteins of the Pre-mRNA 3' end processing machinery, such as CLP1, CPSF1, CPSF4 and CSTF2. As to expression, widely expressed. Highly expressed in testis and uterus.

The protein resides in the nucleus. The protein localises to the nucleolus. In terms of biological role, non-catalytic subunit of the tRNA-splicing endonuclease complex, a complex responsible for identification and cleavage of the splice sites in pre-tRNA. It cleaves pre-tRNA at the 5' and 3' splice sites to release the intron. The products are an intron and two tRNA half-molecules bearing 2',3' cyclic phosphate and 5'-OH termini. There are no conserved sequences at the splice sites, but the intron is invariably located at the same site in the gene, placing the splice sites an invariant distance from the constant structural features of the tRNA body. The tRNA splicing endonuclease is also involved in mRNA processing via its association with pre-mRNA 3'-end processing factors, establishing a link between pre-tRNA splicing and pre-mRNA 3'-end formation, suggesting that the endonuclease subunits function in multiple RNA-processing events. This Homo sapiens (Human) protein is tRNA-splicing endonuclease subunit Sen15 (TSEN15).